A 106-amino-acid chain; its full sequence is NADH-quinone oxidoreductase subunit K (106 aa).

A run of 3 helical transmembrane segments spans residues 9–29 (LGHY…GIFL), 35–55 (IVML…MVAF), and 70–90 (FILT…VIYF).

The protein belongs to the complex I subunit 4L family. NDH-1 is composed of 14 different subunits. Subunits NuoA, H, J, K, L, M, N constitute the membrane sector of the complex.

It is found in the cell inner membrane. It catalyses the reaction a quinone + NADH + 5 H(+)(in) = a quinol + NAD(+) + 4 H(+)(out). NDH-1 shuttles electrons from NADH, via FMN and iron-sulfur (Fe-S) centers, to quinones in the respiratory chain. The immediate electron acceptor for the enzyme in this species is believed to be ubiquinone. Couples the redox reaction to proton translocation (for every two electrons transferred, four hydrogen ions are translocated across the cytoplasmic membrane), and thus conserves the redox energy in a proton gradient. This is NADH-quinone oxidoreductase subunit K from Granulibacter bethesdensis (strain ATCC BAA-1260 / CGDNIH1).